The primary structure comprises 363 residues: Mannose-1-phosphate guanyltransferase (363 aa).

This sequence belongs to the transferase hexapeptide repeat family.

The protein resides in the cytoplasm. It catalyses the reaction alpha-D-mannose 1-phosphate + GTP + H(+) = GDP-alpha-D-mannose + diphosphate. It participates in nucleotide-sugar biosynthesis; GDP-alpha-D-mannose biosynthesis; GDP-alpha-D-mannose from alpha-D-mannose 1-phosphate (GTP route): step 1/1. Its function is as follows. Involved in cell wall synthesis where it is required for glycosylation. Involved in cell cycle progression through cell-size checkpoint. This Yarrowia lipolytica (strain CLIB 122 / E 150) (Yeast) protein is Mannose-1-phosphate guanyltransferase (MPG1).